We begin with the raw amino-acid sequence, 441 residues long: Ribulose bisphosphate carboxylase large chain (441 aa).

Lys-5 is subject to N6,N6,N6-trimethyllysine. Positions 114 and 164 each coordinate substrate. The Proton acceptor role is filled by Lys-166. A substrate-binding site is contributed by Lys-168. Positions 192, 194, and 195 each coordinate Mg(2+). Lys-192 is subject to N6-carboxylysine. His-285 (proton acceptor) is an active-site residue. Arg-286, His-318, and Ser-370 together coordinate substrate.

Belongs to the RuBisCO large chain family. Type I subfamily. Heterohexadecamer of 8 large chains and 8 small chains; disulfide-linked. The disulfide link is formed within the large subunit homodimers. The cofactor is Mg(2+). In terms of processing, the disulfide bond which can form in the large chain dimeric partners within the hexadecamer appears to be associated with oxidative stress and protein turnover.

Its subcellular location is the plastid. The protein resides in the chloroplast. The enzyme catalyses 2 (2R)-3-phosphoglycerate + 2 H(+) = D-ribulose 1,5-bisphosphate + CO2 + H2O. The catalysed reaction is D-ribulose 1,5-bisphosphate + O2 = 2-phosphoglycolate + (2R)-3-phosphoglycerate + 2 H(+). In terms of biological role, ruBisCO catalyzes two reactions: the carboxylation of D-ribulose 1,5-bisphosphate, the primary event in carbon dioxide fixation, as well as the oxidative fragmentation of the pentose substrate in the photorespiration process. Both reactions occur simultaneously and in competition at the same active site. In Pellaea rotundifolia (Button fern), this protein is Ribulose bisphosphate carboxylase large chain.